We begin with the raw amino-acid sequence, 315 residues long: Protein TIFY 4B (315 aa).

Residues 113-145 (CHRRDSPRSAEFSGSSGQFVADKDSHKTVSVSP) form a disordered region. Positions 151–186 (TNAVVGQMTIFYSGKVNVYDGVPPEKARSIMHFAAN) constitute a Tify domain. The Jas signature appears at 233–260 (QANRKVSLQRYLEKRKDRRFSKTKKAPG). The short motif at 235–242 (NRKVSLQR) is the Nuclear localization signal element. Residues 248 to 257 (KDRRFSKTKK) are compositionally biased toward basic residues. Positions 248–315 (KDRRFSKTKK…LNSDLNSEDN (68 aa)) are disordered. Polar residues predominate over residues 293–315 (PENQTKSPNISVDLNSDLNSEDN).

Belongs to the TIFY/JAZ family. Interacts with AFPH2/NINJA.

The protein localises to the nucleus. Functionally, regulates the arrest of dispersed meristematic cells during lamina development. The polypeptide is Protein TIFY 4B (TIFY4B) (Arabidopsis thaliana (Mouse-ear cress)).